The following is a 308-amino-acid chain: ADP-L-glycero-D-manno-heptose-6-epimerase (308 aa).

Residues 10–11 (FI), 31–32 (DN), K38, K53, 75–79 (EGACS), and N92 each bind NADP(+). Y139 (proton acceptor) is an active-site residue. K143 contributes to the NADP(+) binding site. N168 is a substrate binding site. Residues V169 and K177 each contribute to the NADP(+) site. The active-site Proton acceptor is K177. Substrate-binding positions include S179, H186, 200–203 (FAGS), R208, and Y271.

The protein belongs to the NAD(P)-dependent epimerase/dehydratase family. HldD subfamily. Homopentamer. NADP(+) is required as a cofactor.

It carries out the reaction ADP-D-glycero-beta-D-manno-heptose = ADP-L-glycero-beta-D-manno-heptose. It participates in nucleotide-sugar biosynthesis; ADP-L-glycero-beta-D-manno-heptose biosynthesis; ADP-L-glycero-beta-D-manno-heptose from D-glycero-beta-D-manno-heptose 7-phosphate: step 4/4. Its pathway is bacterial outer membrane biogenesis; LOS core biosynthesis. Catalyzes the interconversion between ADP-D-glycero-beta-D-manno-heptose and ADP-L-glycero-beta-D-manno-heptose via an epimerization at carbon 6 of the heptose. This chain is ADP-L-glycero-D-manno-heptose-6-epimerase, found in Haemophilus influenzae (strain ATCC 51907 / DSM 11121 / KW20 / Rd).